Reading from the N-terminus, the 512-residue chain is Endoglucanase 14 (512 aa).

Positions methionine 1–glycine 22 are cleaved as a signal peptide. Asparagine 76 is a glycosylation site (N-linked (GlcNAc...) asparagine). Aspartate 103 (nucleophile) is an active-site residue. 2 N-linked (GlcNAc...) asparagine glycosylation sites follow: asparagine 192 and asparagine 215. Active-site residues include histidine 433, aspartate 484, and glutamate 493.

It belongs to the glycosyl hydrolase 9 (cellulase E) family.

The protein localises to the secreted. The enzyme catalyses Endohydrolysis of (1-&gt;4)-beta-D-glucosidic linkages in cellulose, lichenin and cereal beta-D-glucans.. The polypeptide is Endoglucanase 14 (Oryza sativa subsp. japonica (Rice)).